The sequence spans 305 residues: Protoheme IX farnesyltransferase (305 aa).

9 helical membrane-spanning segments follow: residues 29–49 (LIVFCAAIGMLLAVPGAPGLA), 55–75 (LWATLGIWLVASAAAAFNCLI), 101–121 (ALIFSAVLCSAGMAVLHEAVN), 123–143 (LTAWLTLGTFVGYAVIYTVVL), 151–171 (IVIGGISGAMPPLLGWAAMTG), 177–197 (GLILCLIIFLWTPPHFWALAL), 219–241 (FTRLQILLYTFVLLAGTLLPFVQ), 246–268 (WLYLAAAFVLGLRFIHYAWRLWR), and 283–303 (IWHLSLLFAALLVDHYTQDLL).

This sequence belongs to the UbiA prenyltransferase family. Protoheme IX farnesyltransferase subfamily.

The protein localises to the cell inner membrane. It catalyses the reaction heme b + (2E,6E)-farnesyl diphosphate + H2O = Fe(II)-heme o + diphosphate. It participates in porphyrin-containing compound metabolism; heme O biosynthesis; heme O from protoheme: step 1/1. Its function is as follows. Converts heme B (protoheme IX) to heme O by substitution of the vinyl group on carbon 2 of heme B porphyrin ring with a hydroxyethyl farnesyl side group. The sequence is that of Protoheme IX farnesyltransferase from Leptothrix cholodnii (strain ATCC 51168 / LMG 8142 / SP-6) (Leptothrix discophora (strain SP-6)).